The sequence spans 175 residues: Protein OPG036 (175 aa).

It belongs to the poxviridae OPG036 family.

Its subcellular location is the host nucleus. Functionally, plays a role in the inhibition of host innate immune response. Within the host nucleus, inhibits activation of interferon-beta promoter by inhibiting IRF3 activation. In Homo sapiens (Human), this protein is Protein OPG036 (OPG036).